The chain runs to 461 residues: Flavin-containing monooxygenase FMO GS-OX-like 8 (461 aa).

An FAD-binding site is contributed by 20-25 (GAGPSG). 220-225 (GCSMSG) contacts NADP(+).

It belongs to the FMO family. As to quaternary structure, interacts with EER5. It depends on FAD as a cofactor.

Its function is as follows. Catalyzes the conversion of methylthioalkyl glucosinolates of any chain length into methylsulfinylalkyl glucosinolates. This Arabidopsis thaliana (Mouse-ear cress) protein is Flavin-containing monooxygenase FMO GS-OX-like 8.